Here is a 174-residue protein sequence, read N- to C-terminus: Peptide methionine sulfoxide reductase MsrA (174 aa).

Residue cysteine 11 is part of the active site.

Belongs to the MsrA Met sulfoxide reductase family.

It carries out the reaction L-methionyl-[protein] + [thioredoxin]-disulfide + H2O = L-methionyl-(S)-S-oxide-[protein] + [thioredoxin]-dithiol. It catalyses the reaction [thioredoxin]-disulfide + L-methionine + H2O = L-methionine (S)-S-oxide + [thioredoxin]-dithiol. In terms of biological role, has an important function as a repair enzyme for proteins that have been inactivated by oxidation. Catalyzes the reversible oxidation-reduction of methionine sulfoxide in proteins to methionine. This Nitratiruptor sp. (strain SB155-2) protein is Peptide methionine sulfoxide reductase MsrA.